The chain runs to 353 residues: Glutamine synthetase cytosolic isozyme 1-5 (353 aa).

Thr-2 carries the N-acetylthreonine modification. Ser-3 carries the post-translational modification Phosphoserine. One can recognise a GS beta-grasp domain in the interval 19–99; that stretch reads IIAEYIWIGG…VMCDAYRPAG (81 aa). Residues 106-353 enclose the GS catalytic domain; that stretch reads NRHKAVKIFD…TSMIAETTIL (248 aa).

This sequence belongs to the glutamine synthetase family. In terms of assembly, homooctamer. Not expressed in roots.

The protein resides in the cytoplasm. It catalyses the reaction L-glutamate + NH4(+) + ATP = L-glutamine + ADP + phosphate + H(+). This is Glutamine synthetase cytosolic isozyme 1-5 (GLN1-5) from Arabidopsis thaliana (Mouse-ear cress).